The following is a 100-amino-acid chain: Defensin-like protein 316 (100 aa).

The first 18 residues, 1 to 18, serve as a signal peptide directing secretion; sequence MASHIICYIFCIIKLSCA. Intrachain disulfides connect C21–C84, C43–C64, and C53–C76.

The protein belongs to the DEFL family.

Its subcellular location is the secreted. The sequence is that of Defensin-like protein 316 from Arabidopsis thaliana (Mouse-ear cress).